The sequence spans 389 residues: Krueppel-like factor 17 (389 aa).

2 disordered regions span residues 1–48 (MYGR…SGVH) and 239–279 (LVSQ…GSSE). Residues 26–38 (AQDNENSAPILNM) show a composition bias toward polar residues. Residues 264–278 (KNSRPQEGTGRRGSS) show a composition bias toward basic and acidic residues. 3 C2H2-type zinc fingers span residues 283 to 307 (YCCN…QRKH), 313 to 337 (YSCN…MRVH), and 343 to 365 (YKCD…QKTH). Positions 356-389 (DHLKQHQKTHRPGPSDPQANNNNGEQDSPPAAGP) are disordered. The span at 372-381 (PQANNNNGEQ) shows a compositional bias: polar residues.

This sequence belongs to the Sp1 C2H2-type zinc-finger protein family.

The protein resides in the nucleus. Its function is as follows. Transcription repressor that binds to the promoter of target genes and prevents their expression. Acts as a negative regulator of epithelial-mesenchymal transition and metastasis in breast cancer. Specifically binds the 5'-CACCC-3' sequence in the promoter of ID1, a key metastasis regulator in breast cancer, and repress its expression. May be a germ cell-specific transcription factor that plays important roles in spermatid differentiation and oocyte development. This Homo sapiens (Human) protein is Krueppel-like factor 17 (KLF17).